The sequence spans 255 residues: L-erythrulose-1-phosphate isomerase (255 aa).

His-98 (electrophile) is an active-site residue. Glu-171 serves as the catalytic Proton acceptor. Positions 177 and 214 each coordinate substrate.

This sequence belongs to the triosephosphate isomerase family. Homodimer.

It localises to the cytoplasm. It carries out the reaction L-erythrulose 1-phosphate = D-erythrulose 4-phosphate. It functions in the pathway carbohydrate metabolism; erythritol degradation. In terms of biological role, catalyzes the isomerization of D-erythrulose-4P to L-erythrulose-1P. The chain is L-erythrulose-1-phosphate isomerase from Rhizobium meliloti (strain 1021) (Ensifer meliloti).